A 309-amino-acid polypeptide reads, in one-letter code: Ferrochelatase (309 aa).

Positions 185 and 262 each coordinate Fe cation.

This sequence belongs to the ferrochelatase family.

It is found in the cytoplasm. The enzyme catalyses heme b + 2 H(+) = protoporphyrin IX + Fe(2+). Its pathway is porphyrin-containing compound metabolism; protoheme biosynthesis; protoheme from protoporphyrin-IX: step 1/1. Its function is as follows. Catalyzes the ferrous insertion into protoporphyrin IX. In Campylobacter jejuni subsp. jejuni serotype O:6 (strain 81116 / NCTC 11828), this protein is Ferrochelatase.